Reading from the N-terminus, the 368-residue chain is Histidinol-phosphate aminotransferase (368 aa).

Lys223 carries the N6-(pyridoxal phosphate)lysine modification.

Belongs to the class-II pyridoxal-phosphate-dependent aminotransferase family. Histidinol-phosphate aminotransferase subfamily. Homodimer. Pyridoxal 5'-phosphate is required as a cofactor.

The catalysed reaction is L-histidinol phosphate + 2-oxoglutarate = 3-(imidazol-4-yl)-2-oxopropyl phosphate + L-glutamate. It participates in amino-acid biosynthesis; L-histidine biosynthesis; L-histidine from 5-phospho-alpha-D-ribose 1-diphosphate: step 7/9. The polypeptide is Histidinol-phosphate aminotransferase (hisC) (Sinorhizobium fredii (strain NBRC 101917 / NGR234)).